The following is a 384-amino-acid chain: Alkanesulfonate monooxygenase (384 aa).

The protein belongs to the SsuD family.

It carries out the reaction an alkanesulfonate + FMNH2 + O2 = an aldehyde + FMN + sulfite + H2O + 2 H(+). Catalyzes the desulfonation of aliphatic sulfonates. The sequence is that of Alkanesulfonate monooxygenase from Burkholderia thailandensis (strain ATCC 700388 / DSM 13276 / CCUG 48851 / CIP 106301 / E264).